The following is a 140-amino-acid chain: 3-hydroxyacyl-[acyl-carrier-protein] dehydratase FabZ (140 aa).

The active site involves His-47.

This sequence belongs to the thioester dehydratase family. FabZ subfamily.

The protein resides in the cytoplasm. It catalyses the reaction a (3R)-hydroxyacyl-[ACP] = a (2E)-enoyl-[ACP] + H2O. Involved in unsaturated fatty acids biosynthesis. Catalyzes the dehydration of short chain beta-hydroxyacyl-ACPs and long chain saturated and unsaturated beta-hydroxyacyl-ACPs. This Streptococcus equi subsp. equi (strain 4047) protein is 3-hydroxyacyl-[acyl-carrier-protein] dehydratase FabZ.